A 98-amino-acid chain; its full sequence is Transcription elongation factor A protein-like 7 (98 aa).

Over residues 1-22 (MQKSCNEKEGKPKGSEAKREDE) the composition is skewed to basic and acidic residues. Positions 1–33 (MQKSCNEKEGKPKGSEAKREDEQPCGALEGQRL) are disordered. Residues 59-89 (GEEMTGEEEEMERCLEEIRSLRKKFRALHSN) adopt a coiled-coil conformation.

The protein belongs to the TFS-II family. TFA subfamily.

The protein localises to the nucleus. Plays a role in the negative regulation of NF-kappa-B signaling at the basal level by modulating transcriptional activity of NF-kappa-B on its target gene promoters. Associates with cyclin D1 promoter containing Myc E-box sequence and transcriptionally represses cyclin D1 expression. Regulates telomerase reverse transcriptase expression and telomerase activity in both ALT (alternative lengthening of telomeres)and telomerase-positive cell lines. The protein is Transcription elongation factor A protein-like 7 (Tceal7) of Mus musculus (Mouse).